We begin with the raw amino-acid sequence, 145 residues long: Large ribosomal subunit protein uL24 (145 aa).

2 disordered regions span residues 1 to 21 (MKFN…HFNA) and 122 to 145 (KAKS…KMQE). Residue K136 forms a Glycyl lysine isopeptide (Lys-Gly) (interchain with G-Cter in SUMO2) linkage. T139 is modified (phosphothreonine).

Belongs to the universal ribosomal protein uL24 family. Component of the large ribosomal subunit. Interacts with DHX33. Ufmylated by UFL1 in response to endoplasmic reticulum stress, promoting reticulophagy of endoplasmic reticulum sheets.

It is found in the cytoplasm. Component of the large ribosomal subunit. The ribosome is a large ribonucleoprotein complex responsible for the synthesis of proteins in the cell. This chain is Large ribosomal subunit protein uL24 (Rpl26), found in Rattus norvegicus (Rat).